A 718-amino-acid chain; its full sequence is Kinesin-2a (718 aa).

Residues 5-335 enclose the Kinesin motor domain; sequence NIKVIVRCRP…LRYADRAKQI (331 aa). 97–104 provides a ligand contact to ATP; the sequence is GQTGAGKT. ADP-binding residues include glycine 100, glycine 102, lysine 103, threonine 104, and tryptophan 105. Threonine 104 serves as a coordination point for Mg(2+). Positions 432–477 form a coiled coil; it reads SRKAADELEAKRRALAEAKQKRESELEQKEALNKEAIVTLTDLKSQ.

The protein belongs to the TRAFAC class myosin-kinesin ATPase superfamily. Kinesin family. Kinesin II subfamily. As to quaternary structure, monomer.

The protein resides in the cell projection. It localises to the cilium. It is found in the flagellum. The protein localises to the cytoplasm. Its subcellular location is the cytoskeleton. The protein resides in the flagellum axoneme. It localises to the flagellum basal body. Its function is as follows. Involved in anterograde intraflagellar transport (IFT). Involved in flagellar assembly. This Giardia intestinalis (strain ATCC 50803 / WB clone C6) (Giardia lamblia) protein is Kinesin-2a.